A 765-amino-acid polypeptide reads, in one-letter code: DNA topoisomerase 1 (765 aa).

Basic and acidic residues predominate over residues 1–23 (MSGDHLHNDSQIEADFRLNDSHK). A disordered region spans residues 1-199 (MSGDHLHNDS…NKKKKPKKEE (199 aa)). Ser-2 carries the N-acetylserine modification. 2 positions are modified to phosphoserine: Ser-2 and Ser-10. The segment covering 24–39 (HKDKHKDREHRHKEHK) has biased composition (basic residues). Residues 40–108 (KEKDREKSKH…DAKIKKEKEN (69 aa)) show a composition bias toward basic and acidic residues. Ser-57 is modified (phosphoserine). A Glycyl lysine isopeptide (Lys-Gly) (interchain with G-Cter in SUMO2) cross-link involves residue Lys-101. Lys-103 participates in a covalent cross-link: Glycyl lysine isopeptide (Lys-Gly) (interchain with G-Cter in SUMO); alternate. Residue Lys-103 forms a Glycyl lysine isopeptide (Lys-Gly) (interchain with G-Cter in SUMO2); alternate linkage. At Ser-112 the chain carries Phosphoserine. Residue Lys-117 forms a Glycyl lysine isopeptide (Lys-Gly) (interchain with G-Cter in SUMO); alternate linkage. Residue Lys-117 forms a Glycyl lysine isopeptide (Lys-Gly) (interchain with G-Cter in SUMO2); alternate linkage. Lys-117 participates in a covalent cross-link: Glycyl lysine isopeptide (Lys-Gly) (interchain with G-Cter in SUMO1); alternate. A compositionally biased stretch (basic and acidic residues) spans 129 to 166 (PKEDIKPLKRPRDEDDADYKPKKIKTEDTKKEKKRKLE). Residues Lys-134 and Lys-148 each participate in a glycyl lysine isopeptide (Lys-Gly) (interchain with G-Cter in SUMO2) cross-link. Lys-153 is covalently cross-linked (Glycyl lysine isopeptide (Lys-Gly) (interchain with G-Cter in SUMO); alternate). Residue Lys-153 forms a Glycyl lysine isopeptide (Lys-Gly) (interchain with G-Cter in SUMO2); alternate linkage. Glycyl lysine isopeptide (Lys-Gly) (interchain with G-Cter in SUMO2) cross-links involve residues Lys-158 and Lys-164. Lys-172 is covalently cross-linked (Glycyl lysine isopeptide (Lys-Gly) (interchain with G-Cter in SUMO2); alternate). Lys-172 carries the N6-acetyllysine; alternate modification. Basic and acidic residues predominate over residues 179–199 (KDKDKKVPEPDNKKKKPKKEE). Lys-204 participates in a covalent cross-link: Glycyl lysine isopeptide (Lys-Gly) (interchain with G-Cter in SUMO2). Lys-280 bears the N6-acetyllysine mark. A Glycyl lysine isopeptide (Lys-Gly) (interchain with G-Cter in SUMO2) cross-link involves residue Lys-336. Interaction with DNA regions lie at residues 425-426 (KY) and 488-493 (RAGNEK). The Topo IB-type catalytic domain occupies 432-765 (SSRIKGEKDW…IDMADEDYEF (334 aa)). The residue at position 506 (Ser-506) is a Phosphoserine; by CK2. A Glycyl lysine isopeptide (Lys-Gly) (interchain with G-Cter in SUMO2) cross-link involves residue Lys-549. Positions 585–587 (TAK) are interaction with DNA. Glycyl lysine isopeptide (Lys-Gly) (interchain with G-Cter in SUMO2) cross-links involve residues Lys-642, Lys-700, and Lys-712. Catalysis depends on Tyr-723, which acts as the O-(3'-phospho-DNA)-tyrosine intermediate.

Belongs to the type IB topoisomerase family. In terms of assembly, monomer. Interacts with ERCC6. Interacts with TPRN; TPRN interacts with a number of DNA damage response proteins, is recruited to sites of DNA damage and may play a role in DNA damage repair. As to quaternary structure, (Microbial infection) Interacts with SV40 Large T antigen; this interactions allows viral DNA replication. Sumoylated. Lys-117 is the main site of sumoylation. Sumoylation plays a role in partitioning TOP1 between nucleoli and nucleoplasm. Levels are dramatically increased on camptothecin (CPT) treatment. In terms of processing, phosphorylation at Ser-506 by CK2 increases binding to supercoiled DNA and sensitivity to camptothecin. Endothelial cells.

Its subcellular location is the nucleus. It is found in the nucleolus. It localises to the nucleoplasm. It carries out the reaction ATP-independent breakage of single-stranded DNA, followed by passage and rejoining.. With respect to regulation, specifically inhibited by camptothecin (CPT), a plant alkaloid with antitumor activity. Functionally, releases the supercoiling and torsional tension of DNA introduced during the DNA replication and transcription by transiently cleaving and rejoining one strand of the DNA duplex. Introduces a single-strand break via transesterification at a target site in duplex DNA. The scissile phosphodiester is attacked by the catalytic tyrosine of the enzyme, resulting in the formation of a DNA-(3'-phosphotyrosyl)-enzyme intermediate and the expulsion of a 5'-OH DNA strand. The free DNA strand then rotates around the intact phosphodiester bond on the opposing strand, thus removing DNA supercoils. Finally, in the religation step, the DNA 5'-OH attacks the covalent intermediate to expel the active-site tyrosine and restore the DNA phosphodiester backbone. Regulates the alternative splicing of tissue factor (F3) pre-mRNA in endothelial cells. Involved in the circadian transcription of the core circadian clock component BMAL1 by altering the chromatin structure around the ROR response elements (ROREs) on the BMAL1 promoter. The protein is DNA topoisomerase 1 (TOP1) of Homo sapiens (Human).